We begin with the raw amino-acid sequence, 364 residues long: C3a anaphylatoxin chemotactic receptor (364 aa).

The Extracellular portion of the chain corresponds to 1 to 50; sequence MGDNMDFSEHYGNFSENYVTESYGEFDLYYDPLNETSLSEQGHRSIWVLS. Residues Asn-13 and Asn-34 are each glycosylated (N-linked (GlcNAc...) asparagine). The chain crosses the membrane as a helical span at residues 51 to 71; it reads IVLCSIACVLGITGNAFVIWI. Residues 72–82 are Cytoplasmic-facing; it reads AGVKMKRTVNT. The helical transmembrane segment at 83 to 103 threads the bilayer; that stretch reads IWFVNLAAADLLCCVSIPFSI. Over 104 to 120 the chain is Extracellular; it reads ADIILNSHWPYGEAMCK. A disulfide bridge links Cys-119 with Cys-198. A helical transmembrane segment spans residues 121–141; it reads ILPSMVVLNMFASVFTLVLIS. Topologically, residues 142-159 are cytoplasmic; sequence LDRFALVILPVWAQNHRS. The chain crosses the membrane as a helical span at residues 160-180; that stretch reads ITLAWLLCGLVWVLGLLLSLP. The Extracellular portion of the chain corresponds to 181–220; that stretch reads SMIYREIVVHDDMNITLCIYNHLQDKTEGNQSAIKAIHVT. A helical transmembrane segment spans residues 221 to 241; it reads RLILGFLIPLLVIAVCYLLIG. Residues 242–256 lie on the Cytoplasmic side of the membrane; that stretch reads RRVSSGRFKSQRAFQ. A helical membrane pass occupies residues 257 to 277; that stretch reads IILVVVTTFFVCWLPYHVIGL. At 278 to 295 the chain is on the extracellular side; it reads VIEYGKEASQVMARALDP. A helical membrane pass occupies residues 296-316; it reads LAISLAYVNSCLNPVLYVFMG. At 317–364 the chain is on the cytoplasmic side; the sequence is QDFKERVRVSLRKIFEKVFSEDVTLRSSVYSKGQSQLSRATNSSEAQV.

The protein belongs to the G-protein coupled receptor 1 family.

The protein resides in the cell membrane. Its function is as follows. Receptor for the chemotactic and inflammatory peptide anaphylatoxin C3a. This receptor stimulates chemotaxis, granule enzyme release and superoxide anion production. The sequence is that of C3a anaphylatoxin chemotactic receptor (c3ar1) from Oncorhynchus mykiss (Rainbow trout).